The chain runs to 356 residues: 3-dehydroquinate synthase (356 aa).

NAD(+)-binding positions include D69 to K74, G103 to D107, T127 to T128, K140, and K149. The Zn(2+) site is built by E182, H245, and H262.

It belongs to the sugar phosphate cyclases superfamily. Dehydroquinate synthase family. Co(2+) serves as cofactor. Requires Zn(2+) as cofactor. It depends on NAD(+) as a cofactor.

It localises to the cytoplasm. The catalysed reaction is 7-phospho-2-dehydro-3-deoxy-D-arabino-heptonate = 3-dehydroquinate + phosphate. It participates in metabolic intermediate biosynthesis; chorismate biosynthesis; chorismate from D-erythrose 4-phosphate and phosphoenolpyruvate: step 2/7. Catalyzes the conversion of 3-deoxy-D-arabino-heptulosonate 7-phosphate (DAHP) to dehydroquinate (DHQ). The sequence is that of 3-dehydroquinate synthase from Pseudoalteromonas translucida (strain TAC 125).